The chain runs to 391 residues: Multidrug resistance protein MdtL (391 aa).

A run of 12 helical transmembrane segments spans residues F4–V24, I42–A62, P69–E89, L93–F113, L131–M151, S158–L178, F203–V222, A245–F265, T269–P289, V293–M313, L331–I351, and M356–A376.

It belongs to the major facilitator superfamily. DHA1 family. MdtL (TC 2.A.1.2.22) subfamily.

Its subcellular location is the cell inner membrane. Its function is as follows. Confers resistance to chloramphenicol. The protein is Multidrug resistance protein MdtL of Escherichia coli O139:H28 (strain E24377A / ETEC).